The chain runs to 649 residues: Leucine-rich repeat transmembrane protein FLRT3 (649 aa).

The signal sequence occupies residues 1-28; it reads MISPAWSLFLIGTKIGLFFQVAPLSVMA. An LRRNT domain is found at 29–58; sequence KSCPSVCRCDAGFIYCNDRSLTSIPVGIPE. Topologically, residues 29–528 are extracellular; sequence KSCPSVCRCD…KEPYKNPNLP (500 aa). Cystine bridges form between C31–C37 and C35–C44. Positions 38–67 are interaction with ADGRL3; the sequence is DAGFIYCNDRSLTSIPVGIPEDATTLYLQN. LRR repeat units lie at residues 59–80, 84–104, 105–126, 129–150, 155–176, 177–197, 200–220, 226–247, 248–269, and 272–293; these read DATTLYLQNNQINNVGIPSDLK, KVQRIYLYHNSLDEFPTNLPK, YVKELHLQENNIRTITYDSLSK, YLEELHLDDNSVSAVSIEEGAF, YLRLLFLSRNHLSTIPGGLPRT, IEELRLDDNRISTISSPSLHG, SLKRLVLDGNLLNNHGLGDKV, NLTELSLVRNSLTAAPVNLPGT, SLRKLYLQDNHINRVPPNAFSY, and QLYRLDMSNNNLSNLPQGIFDD. N226 is a glycosylation site (N-linked (GlcNAc...) asparagine). Residues N282 and N296 are each glycosylated (N-linked (GlcNAc...) asparagine). An LRRCT domain is found at 305-357; sequence NPWYCGCKMKWVRDWLQSLPVKVNVRGLMCQAPEKVRGMAIKDLSAELFDCKD. C309 and C334 are disulfide-bonded. Residues 378 to 405 form a disordered region; the sequence is QGQWPAPVTKQPDIKNPKLTKDQRTTGS. Over residues 389-401 the composition is skewed to basic and acidic residues; that stretch reads PDIKNPKLTKDQR. The 100-residue stretch at 405–504 folds into the Fibronectin type-III domain; it reads SPSRKTILIT…VCIETQTAPL (100 aa). The helical transmembrane segment at 529–549 threads the bilayer; it reads LAAIIGGAVALVSIALLALVC. Residues 550–649 are Cytoplasmic-facing; it reads WYVHRNGSLF…GIPDLDHSHS (100 aa). Residues 629-649 form a disordered region; sequence ESSSNRSYRDSGIPDLDHSHS.

In terms of assembly, monomer and homodimer. Self-associates (via leucine-rich repeats), giving rise to homooligomers. Interacts with FGFR1. Interacts (via extracellular domain) with ADGRL1/LPHN1 and ADGRL3 (via olfactomedin-like domain). Interacts (via extracellular domain) with LPHN2 (via olfactomedin-like domain). Interacts (via extracellular domain) with UNC5B (via Ig domain). May also interact (via extracellular domain) with UNC5A and UNC5C. Interacts (via extracellular domain) with UNC5D (via extracellular domain). Identified in complexes composed of FLRT3, ADGRL3 and UNC5B, respectively FLRT3, ADGRL3 and UNC5D. Interacts (via cytoplasmic domain) with ROBO1. In terms of processing, N-glycosylated. Proteolytic cleavage in the juxtamembrane region gives rise to a soluble ectodomain. Cleavage is probably effected by a metalloprotease. As to expression, detected in brain (at protein level). Detected in brain neurons, especially in basal ganglia, hippocampus dentate gyrus and CA3 region, cerebellum and in olfactory bulb.

It is found in the cell membrane. The protein localises to the presynaptic cell membrane. Its subcellular location is the synapse. The protein resides in the synaptosome. It localises to the postsynaptic density. It is found in the cell projection. The protein localises to the dendrite. Its subcellular location is the axon. The protein resides in the growth cone membrane. It localises to the cytoplasmic vesicle. It is found in the endoplasmic reticulum membrane. The protein localises to the cell junction. Its subcellular location is the focal adhesion. The protein resides in the secreted. In terms of biological role, functions in cell-cell adhesion, cell migration and axon guidance, exerting an attractive or repulsive role depending on its interaction partners. Plays a role in the spatial organization of brain neurons. Plays a role in vascular development in the retina. Plays a role in cell-cell adhesion via its interaction with ADGRL3 and probably also other latrophilins that are expressed at the surface of adjacent cells. Interaction with the intracellular domain of ROBO1 mediates axon attraction towards cells expressing NTN1. Mediates axon growth cone collapse and plays a repulsive role in neuron guidance via its interaction with UNC5B, and possibly also other UNC-5 family members. Promotes neurite outgrowth (in vitro). Mediates cell-cell contacts that promote an increase both in neurite number and in neurite length. Plays a role in the regulation of the density of glutamaergic synapses. Plays a role in fibroblast growth factor-mediated signaling cascades. Required for normal morphogenesis during embryonic development, but not for normal embryonic patterning. Required for normal ventral closure, headfold fusion and definitive endoderm migration during embryonic development. Required for the formation of a normal basement membrane and the maintenance of a normal anterior visceral endoderm during embryonic development. The sequence is that of Leucine-rich repeat transmembrane protein FLRT3 (Flrt3) from Rattus norvegicus (Rat).